A 362-amino-acid chain; its full sequence is Chorismate synthase (362 aa).

Arg47 is an NADP(+) binding site. FMN-binding positions include 124–126, Gly286, 301–305, and Arg327; these read RSS and KPTAT.

The protein belongs to the chorismate synthase family. As to quaternary structure, homotetramer. FMNH2 serves as cofactor.

The enzyme catalyses 5-O-(1-carboxyvinyl)-3-phosphoshikimate = chorismate + phosphate. The protein operates within metabolic intermediate biosynthesis; chorismate biosynthesis; chorismate from D-erythrose 4-phosphate and phosphoenolpyruvate: step 7/7. Catalyzes the anti-1,4-elimination of the C-3 phosphate and the C-6 proR hydrogen from 5-enolpyruvylshikimate-3-phosphate (EPSP) to yield chorismate, which is the branch point compound that serves as the starting substrate for the three terminal pathways of aromatic amino acid biosynthesis. This reaction introduces a second double bond into the aromatic ring system. The chain is Chorismate synthase from Synechococcus elongatus (strain ATCC 33912 / PCC 7942 / FACHB-805) (Anacystis nidulans R2).